The chain runs to 318 residues: Aspartate carbamoyltransferase catalytic subunit (318 aa).

2 residues coordinate carbamoyl phosphate: Arg-54 and Thr-55. Residue Lys-82 participates in L-aspartate binding. Arg-104, His-134, and Gln-137 together coordinate carbamoyl phosphate. L-aspartate is bound by residues Arg-174 and Arg-230. Residues Gly-271 and Pro-272 each coordinate carbamoyl phosphate.

This sequence belongs to the aspartate/ornithine carbamoyltransferase superfamily. ATCase family. As to quaternary structure, heterododecamer (2C3:3R2) of six catalytic PyrB chains organized as two trimers (C3), and six regulatory PyrI chains organized as three dimers (R2).

The enzyme catalyses carbamoyl phosphate + L-aspartate = N-carbamoyl-L-aspartate + phosphate + H(+). The protein operates within pyrimidine metabolism; UMP biosynthesis via de novo pathway; (S)-dihydroorotate from bicarbonate: step 2/3. In terms of biological role, catalyzes the condensation of carbamoyl phosphate and aspartate to form carbamoyl aspartate and inorganic phosphate, the committed step in the de novo pyrimidine nucleotide biosynthesis pathway. The sequence is that of Aspartate carbamoyltransferase catalytic subunit from Clavibacter michiganensis subsp. michiganensis (strain NCPPB 382).